The chain runs to 515 residues: SWI/SNF global transcription activator complex subunit snf59 (515 aa).

The tract at residues 1 to 226 (MEEEDITLEH…IHHVDSKNEE (226 aa)) is disordered. 5 stretches are compositionally biased toward basic and acidic residues: residues 7–37 (TLEH…DNSN), 50–59 (EEPKYHDNSN), 73–85 (EPEH…KEST), 94–103 (EEPKHHDNSN), and 116–125 (EEPKHHDSSN). Polar residues predominate over residues 126-136 (KESTNLDNSNM). Residues 140–226 (ENQKNFKIEE…IHHVDSKNEE (87 aa)) show a composition bias toward basic and acidic residues.

This sequence belongs to the RSC7/SWP82 family. SWP82 subfamily. Component of the SWI/SNF global transcription activator complex composed of at least arp9, arp42, snf5, snf22, snf30, snf59, sol1, ssr1, ssr2, ssr3, ssr4 and tfg3.

The protein resides in the nucleus. Its function is as follows. Component of the SWI/SNF complex, an ATP-dependent chromatin remodeling complex, which is required for the positive and negative regulation of gene expression of a large number of genes. It changes chromatin structure by altering DNA-histone contacts within a nucleosome, leading eventually to a change in nucleosome position, thus facilitating or repressing binding of gene-specific transcription factors. The protein is SWI/SNF global transcription activator complex subunit snf59 (snf59) of Schizosaccharomyces pombe (strain 972 / ATCC 24843) (Fission yeast).